Consider the following 142-residue polypeptide: Large ribosomal subunit protein uL13 (142 aa).

It belongs to the universal ribosomal protein uL13 family. Part of the 50S ribosomal subunit.

This protein is one of the early assembly proteins of the 50S ribosomal subunit, although it is not seen to bind rRNA by itself. It is important during the early stages of 50S assembly. This Tolumonas auensis (strain DSM 9187 / NBRC 110442 / TA 4) protein is Large ribosomal subunit protein uL13.